The following is a 293-amino-acid chain: 4-diphosphocytidyl-2-C-methyl-D-erythritol kinase (293 aa).

Lysine 16 is a catalytic residue. 99-109 is a binding site for ATP; sequence PMGAGLGGGSS. Aspartate 141 is a catalytic residue.

This sequence belongs to the GHMP kinase family. IspE subfamily.

The enzyme catalyses 4-CDP-2-C-methyl-D-erythritol + ATP = 4-CDP-2-C-methyl-D-erythritol 2-phosphate + ADP + H(+). Its pathway is isoprenoid biosynthesis; isopentenyl diphosphate biosynthesis via DXP pathway; isopentenyl diphosphate from 1-deoxy-D-xylulose 5-phosphate: step 3/6. Its function is as follows. Catalyzes the phosphorylation of the position 2 hydroxy group of 4-diphosphocytidyl-2C-methyl-D-erythritol. This chain is 4-diphosphocytidyl-2-C-methyl-D-erythritol kinase, found in Burkholderia mallei (strain NCTC 10247).